We begin with the raw amino-acid sequence, 469 residues long: Neuraminidase (469 aa).

The Intravirion portion of the chain corresponds to 1–6 (MNPNQK). A helical transmembrane segment spans residues 7-27 (IITIGSICMVVGIISLILQIG). The segment at 11–33 (GSICMVVGIISLILQIGNIVSIW) is involved in apical transport and lipid raft association. The Virion surface segment spans residues 28-469 (NIVSIWISHS…GAELPFTIDK (442 aa)). A hypervariable stalk region region spans residues 36–90 (HSIQTGNQNHTGTCNQSIITYKNSTWVNQTYVNISNTNVVAGKDTTSVILAGNSS). Residues Asn-44, Asn-50, Asn-58, Asn-63, Asn-68, and Asn-88 are each glycosylated (N-linked (GlcNAc...) asparagine; by host). A head of neuraminidase region spans residues 91 to 469 (LCPIRGWAIY…GAELPFTIDK (379 aa)). Cystine bridges form between Cys-92/Cys-417, Cys-124/Cys-129, Cys-184/Cys-231, Cys-233/Cys-238, Cys-279/Cys-292, Cys-281/Cys-290, Cys-318/Cys-335, and Cys-421/Cys-446. Arg-118 contributes to the substrate binding site. N-linked (GlcNAc...) asparagine; by host glycosylation is present at Asn-146. Asp-151 functions as the Proton donor/acceptor in the catalytic mechanism. A substrate-binding site is contributed by Arg-152. Asn-235 carries an N-linked (GlcNAc...) asparagine; by host glycan. Residue 277–278 (EE) participates in substrate binding. Arg-293 is a binding site for substrate. Asp-294, Gly-298, Asp-324, and Asn-344 together coordinate Ca(2+). A glycan (N-linked (GlcNAc...) asparagine; by host) is linked at Asn-365. Arg-368 contributes to the substrate binding site. Tyr-402 functions as the Nucleophile in the catalytic mechanism.

The protein belongs to the glycosyl hydrolase 34 family. Homotetramer. Ca(2+) is required as a cofactor. N-glycosylated.

The protein resides in the virion membrane. It localises to the host apical cell membrane. The enzyme catalyses Hydrolysis of alpha-(2-&gt;3)-, alpha-(2-&gt;6)-, alpha-(2-&gt;8)- glycosidic linkages of terminal sialic acid residues in oligosaccharides, glycoproteins, glycolipids, colominic acid and synthetic substrates.. With respect to regulation, inhibited by the neuraminidase inhibitors zanamivir (Relenza) and oseltamivir (Tamiflu). These drugs interfere with the release of progeny virus from infected cells and are effective against all influenza strains. Resistance to neuraminidase inhibitors is quite rare. Functionally, catalyzes the removal of terminal sialic acid residues from viral and cellular glycoconjugates. Cleaves off the terminal sialic acids on the glycosylated HA during virus budding to facilitate virus release. Additionally helps virus spread through the circulation by further removing sialic acids from the cell surface. These cleavages prevent self-aggregation and ensure the efficient spread of the progeny virus from cell to cell. Otherwise, infection would be limited to one round of replication. Described as a receptor-destroying enzyme because it cleaves a terminal sialic acid from the cellular receptors. May facilitate viral invasion of the upper airways by cleaving the sialic acid moieties on the mucin of the airway epithelial cells. Likely to plays a role in the budding process through its association with lipid rafts during intracellular transport. May additionally display a raft-association independent effect on budding. Plays a role in the determination of host range restriction on replication and virulence. Sialidase activity in late endosome/lysosome traffic seems to enhance virus replication. This Aves (Human) protein is Neuraminidase.